The sequence spans 267 residues: Glucosamine-6-phosphate deaminase (267 aa).

Residue Asp72 is the Proton acceptor; for enolization step of the active site. Asp141 acts as the For ring-opening step in catalysis. The active-site Proton acceptor; for ring-opening step is His143. Glu148 (for ring-opening step) is an active-site residue.

It belongs to the glucosamine/galactosamine-6-phosphate isomerase family. NagB subfamily. Homohexamer.

It carries out the reaction alpha-D-glucosamine 6-phosphate + H2O = beta-D-fructose 6-phosphate + NH4(+). Its pathway is amino-sugar metabolism; N-acetylneuraminate degradation; D-fructose 6-phosphate from N-acetylneuraminate: step 5/5. Its activity is regulated as follows. Allosterically activated by N-acetylglucosamine 6-phosphate (GlcNAc6P). Catalyzes the reversible isomerization-deamination of glucosamine 6-phosphate (GlcN6P) to form fructose 6-phosphate (Fru6P) and ammonium ion. In Actinobacillus pleuropneumoniae serotype 5b (strain L20), this protein is Glucosamine-6-phosphate deaminase.